Reading from the N-terminus, the 311-residue chain is Ribosomal RNA small subunit methyltransferase H (311 aa).

Residues 32-34 (AGH), aspartate 52, phenylalanine 79, aspartate 100, and glutamine 107 contribute to the S-adenosyl-L-methionine site. The disordered stretch occupies residues 287-311 (TASQEELEENNRARSAKLRIAEKRK). The span at 300-311 (RSAKLRIAEKRK) shows a compositional bias: basic residues.

The protein belongs to the methyltransferase superfamily. RsmH family.

The protein localises to the cytoplasm. The enzyme catalyses cytidine(1402) in 16S rRNA + S-adenosyl-L-methionine = N(4)-methylcytidine(1402) in 16S rRNA + S-adenosyl-L-homocysteine + H(+). Functionally, specifically methylates the N4 position of cytidine in position 1402 (C1402) of 16S rRNA. In Bacillus subtilis (strain 168), this protein is Ribosomal RNA small subunit methyltransferase H.